The primary structure comprises 120 residues: Chaperonin GroEL (120 aa).

23–27 (DGTTT) serves as a coordination point for ATP.

This sequence belongs to the chaperonin (HSP60) family. In terms of assembly, forms a cylinder of 14 subunits composed of two heptameric rings stacked back-to-back. Interacts with the co-chaperonin GroES.

Its subcellular location is the cytoplasm. The enzyme catalyses ATP + H2O + a folded polypeptide = ADP + phosphate + an unfolded polypeptide.. Its function is as follows. Together with its co-chaperonin GroES, plays an essential role in assisting protein folding. The GroEL-GroES system forms a nano-cage that allows encapsulation of the non-native substrate proteins and provides a physical environment optimized to promote and accelerate protein folding. This is Chaperonin GroEL from Mycolicibacterium fallax (Mycobacterium fallax).